The chain runs to 74 residues: NADH dehydrogenase [ubiquinone] 1 alpha subcomplex assembly factor 8 (74 aa).

A CHCH domain is found at 22–69 (LAACGAEAAAYGRCVQASTAPGGRLSKDFCAREFEALRSCFAAAAKKT). Short sequence motifs (cx9C motif) lie at residues 25–35 (CGAEAAAYGRC) and 51–61 (CAREFEALRSC). 2 disulfides stabilise this stretch: cysteine 25/cysteine 61 and cysteine 35/cysteine 51.

As to quaternary structure, interacts with NDUFAF5.

The protein localises to the mitochondrion. Involved in the assembly of mitochondrial NADH:ubiquinone oxidoreductase complex (complex I, MT-ND1). Required to stabilize NDUFAF5. The sequence is that of NADH dehydrogenase [ubiquinone] 1 alpha subcomplex assembly factor 8 from Homo sapiens (Human).